The chain runs to 141 residues: Hemoglobin subunit alpha-A (141 aa).

The Globin domain occupies Val1 to Arg141. Residue His58 participates in O2 binding. Residue His87 participates in heme b binding.

Belongs to the globin family. In terms of assembly, heterotetramer of two alpha chains and two beta chains. Red blood cells.

In terms of biological role, involved in oxygen transport from the lung to the various peripheral tissues. The polypeptide is Hemoglobin subunit alpha-A (HBAA) (Chrysemys picta bellii (Western painted turtle)).